The sequence spans 163 residues: MNLEDLAKKTISEVSSIMEEQRRQNEILKEQELNRKTEIKDELPPMEFVCEELDTPQDLEDKISMAKFEEEQKIQNNIEISTQENKEFKKEEPFLQNEILNPSVMTEVQTLNEDIFLKHLRERILVLFEGLNSIKKDDLENRLNLTINFLEFLLANIEDKLKK.

The MKD motif lies at 135-145 (KKDDLENRLNL).

In terms of assembly, interacts with the host cell protein IQGAP1, thus displacing RACGAP1 from the IQGAP1 complex.

Its subcellular location is the secreted. The protein resides in the host cytoplasm. The protein localises to the host cytosol. Effector protein required for the development of acute disease and colon inflammatory lesions. Required for maximal host cell invasion and maximal secretion of the inflammatory chemokine interleukin-8 (IL-8) from host cells. Acts by activating the host MAP kinase signaling pathways ERK-1/2 and p38 to promote both cellular invasion and the release of IL-8. CiaD mediated activation of ERK-1/2 leads to the phosphorylation of host cortactin (CTTN) on serine residues and association of cortactin with N-WASP, promoting actin cytoskeleton rearrangement, membrane ruffling and host cell invasion. In addition, maximal host cell invasion requires interaction with the host cell protein IQGAP1, a Ras GTPase-activating-like protein. Binding to IQGAP1 facilitates the activation of the Rho GTPases RAC1 and CDC42, further promoting actin reorganization and bacterial uptake. CiaD promotes RAC1 activation by excluding RACGAP1 from the IQGAP1 complex, preventing the deactivation of RAC1. CiaD probably activates ERK signaling upstream or independently of IQGAP1. This Campylobacter jejuni subsp. jejuni serotype O:2 (strain ATCC 700819 / NCTC 11168) protein is Campylobacter invasion antigen D.